The primary structure comprises 355 residues: Putative inositol monophosphatase 3 (355 aa).

A helical transmembrane segment spans residues 16-36; it reads LPATIVAILLTFVLVYFLNFH. The Mg(2+) site is built by Glu127, Asp167, Leu169, Asp170, and Asp292. Glu127 is a binding site for substrate. Substrate is bound by residues 169-172 and Asp292; that span reads LDAT.

The protein belongs to the inositol monophosphatase superfamily. Mg(2+) is required as a cofactor.

It localises to the membrane. It catalyses the reaction a myo-inositol phosphate + H2O = myo-inositol + phosphate. It functions in the pathway polyol metabolism; myo-inositol biosynthesis; myo-inositol from D-glucose 6-phosphate: step 2/2. This Drosophila melanogaster (Fruit fly) protein is Putative inositol monophosphatase 3.